Consider the following 427-residue polypeptide: Homoprotocatechuate catabolism bifunctional isomerase/decarboxylase (427 aa).

Approximate repeat units follow at residues Met-1 to Pro-202 and Val-203 to Glu-405. Residues Glu-276, Glu-278, and Asp-307 each contribute to the a divalent metal cation site.

The protein belongs to the FAH family. Monomer. Requires Mg(2+) as cofactor.

The catalysed reaction is (2E,4Z)-5-hydroxypenta-2,4-diene-1,2,5-tricarboxylate = (3E,5R)-5-carboxy-2-oxohept-3-enedioate. The enzyme catalyses (3E,5R)-5-carboxy-2-oxohept-3-enedioate + H(+) = (4Z)-2-oxohept-4-enedioate + CO2. It participates in aromatic compound metabolism; 4-hydroxyphenylacetate degradation; pyruvate and succinate semialdehyde from 4-hydroxyphenylacetate: step 4/7. The protein operates within aromatic compound metabolism; 4-hydroxyphenylacetate degradation; pyruvate and succinate semialdehyde from 4-hydroxyphenylacetate: step 5/7. In terms of biological role, decarboxylates OPET (5-oxo-pent-3-ene-1,2,5-tricarboxylic acid) into HHDD (2-hydroxy-hept-2,4-diene-1,7-dioate) and isomerizes it to OHED (2-oxo-hept-3-ene-1,7-dioate). This Escherichia coli protein is Homoprotocatechuate catabolism bifunctional isomerase/decarboxylase (hpcE).